The sequence spans 579 residues: Tetratricopeptide repeat protein 39C (579 aa).

Polar residues predominate over residues 182–197 (QQGALASDQANHNTST). The disordered stretch occupies residues 182-202 (QQGALASDQANHNTSTGSGGR). 3 TPR repeats span residues 311–344 (SLFIFFKGRVQRLECQINSALASFQDALEFASDQ), 349–382 (HVCLYEIGWCSMIEMSFEDAFRSFERLKNESRWS), and 481–514 (GLKHLLLGAIQKCLGNIKDALQSFQLAAQDEYGR).

It belongs to the TTC39 family.

This chain is Tetratricopeptide repeat protein 39C (ttc39c), found in Danio rerio (Zebrafish).